Consider the following 498-residue polypeptide: Cytochrome P450 monooxygenase astB (498 aa).

Residues 7 to 27 (FTTMPVVLLVGLVLYQLLAFT) traverse the membrane as a helical segment. Residues Asn-237, Asn-248, and Asn-346 are each glycosylated (N-linked (GlcNAc...) asparagine). A heme-binding site is contributed by Cys-425.

This sequence belongs to the cytochrome P450 family. It depends on heme as a cofactor.

The protein resides in the membrane. It catalyses the reaction preasperterpenoid A + 4 reduced [NADPH--hemoprotein reductase] + 4 O2 = asperterpenoid A + 4 oxidized [NADPH--hemoprotein reductase] + 5 H2O + 5 H(+). The catalysed reaction is asperterpenoid A + 2 reduced [NADPH--hemoprotein reductase] + 2 O2 = asperterpenoid B + 2 oxidized [NADPH--hemoprotein reductase] + 3 H2O + 3 H(+). The protein operates within secondary metabolite biosynthesis; terpenoid biosynthesis. Functionally, cytochrome P450 monooxygenase; part of the gene cluster that mediates the biosynthesis of the asperterpenoids, sesterterpenes that exhibit anti-tuberculosis activity. The first step of the pathway is performed by the sesterterpene synthase astC that possesses both prenyl transferase and terpene cyclase activity, converting isopentenyl diphosphate and dimethylallyl diphosphate into geranylfarnesyl diphosphate (GFPP) and further converting GFPP into preasperterpenoid A, respectively. The cytochrome P450 monooxygenase astB then dually oxidizes preasperterpenoid A to produce asperterpenoid A along with a minor product, asperterpenoid B. Finally, the cytochrome P450 monooxygenase astA converts asperterpenoid A into asperterpenoid C. The chain is Cytochrome P450 monooxygenase astB from Talaromyces wortmannii (Penicillium wortmannii).